The following is a 189-amino-acid chain: GTP cyclohydrolase 1 (189 aa).

C78, H81, and C150 together coordinate Zn(2+).

The protein belongs to the GTP cyclohydrolase I family. Homomer.

The enzyme catalyses GTP + H2O = 7,8-dihydroneopterin 3'-triphosphate + formate + H(+). It functions in the pathway cofactor biosynthesis; 7,8-dihydroneopterin triphosphate biosynthesis; 7,8-dihydroneopterin triphosphate from GTP: step 1/1. In Bacillus cytotoxicus (strain DSM 22905 / CIP 110041 / 391-98 / NVH 391-98), this protein is GTP cyclohydrolase 1.